The chain runs to 148 residues: Dermatopontin (148 aa).

A disulfide bridge links C14 with C40. N-linked (GlcNAc...) asparagine glycosylation is present at N44. 2 cysteine pairs are disulfide-bonded: C66–C93 and C103–C147.

Belongs to the dermatopontin family. In terms of processing, the terminal mannose residues of the polysaccharide are 3-O-methylated. No tyrosine sulfation was detected.

Its subcellular location is the secreted. The protein localises to the extracellular space. It is found in the extracellular matrix. In terms of biological role, seems to mediate adhesion by cell surface integrin binding. The sequence is that of Dermatopontin from Biomphalaria glabrata (Bloodfluke planorb).